A 132-amino-acid polypeptide reads, in one-letter code: Small ribosomal subunit protein uS8c (132 aa).

It belongs to the universal ribosomal protein uS8 family. As to quaternary structure, part of the 30S ribosomal subunit.

The protein resides in the plastid. Its subcellular location is the chloroplast. In terms of biological role, one of the primary rRNA binding proteins, it binds directly to 16S rRNA central domain where it helps coordinate assembly of the platform of the 30S subunit. The protein is Small ribosomal subunit protein uS8c (rps8) of Phaeodactylum tricornutum (strain CCAP 1055/1).